The chain runs to 307 residues: D-alanine--D-alanine ligase (307 aa).

Residues 101 to 301 enclose the ATP-grasp domain; sequence KTVMRAAGVS…FGELVRWMVE (201 aa). Residue 127 to 182 participates in ATP binding; that stretch reads PLTPPYVVKPIAEGSSMGVIIVRDERSHPPQILASDEWVYGEEVLAETYVAGRELT. 3 residues coordinate Mg(2+): Asp-251, Glu-268, and Asn-270.

This sequence belongs to the D-alanine--D-alanine ligase family. It depends on Mg(2+) as a cofactor. Mn(2+) serves as cofactor.

The protein localises to the cytoplasm. It carries out the reaction 2 D-alanine + ATP = D-alanyl-D-alanine + ADP + phosphate + H(+). It functions in the pathway cell wall biogenesis; peptidoglycan biosynthesis. Cell wall formation. The chain is D-alanine--D-alanine ligase from Methylorubrum extorquens (strain CM4 / NCIMB 13688) (Methylobacterium extorquens).